The following is a 377-amino-acid chain: Acetyltransferase ple2 (377 aa).

An N-terminal signal peptide occupies residues 1–27 (MKPFSPELLVLSFILLVLSCAIRPAKG). 4 helical membrane-spanning segments follow: residues 29–49 (WILWVIIVALNTYLTMTTTGD), 56–76 (IANNLFVITLTATDYILLTDV), 176–196 (IAAWLLFTTNQVSILLTALSL), and 258–278 (PALYVQLYAAFFLSGVLHAIG).

It belongs to the wax synthase family.

It localises to the membrane. The protein operates within secondary metabolite biosynthesis; terpenoid biosynthesis. Acetyltransferase; part of the gene cluster that mediates the biosynthesis of pleuromutilin, a tricyclic diterpene showing antibacterial properties. The geranylgeranyl diphosphate (GGPP) synthase ple4 catalyzes the first step in pleuromutilin biosynthesis. GGPP is then substrate of the premutilin synthase (PS) ple3 to yield premutilin. Premutilin synthase is a bifunctional enzyme composed of the fusion of a class II diterpene cyclase (DTC) and a class I diterpene synthase (DTS), with the corresponding domains and active sites containing characteristic aspartate-rich motifs. GGPP is first converted to mutildienyl-diphosphate (MPP) at the class II DTC site. MPP is subsequently further cyclized at the class I DTS site, followed by a 1,5-hydride shift and addition of water prior to terminating deprotonation, to yield premutilin. The cytochrome P450 monooxygenases ple5 and ple6 hydroxylate premutilin at C-11 and C-3, respectively, producing 11-hydroxypremutilin and 3-hydroxypremutilin. The combination of the actions of both ple5 and ple6 leads to the production of 3,11-dihydroxypremutilin. The short chain dehydrogenase ple7 further converts 3,11-dihydroxypremutilin into mutilin. The acetyltransferase ple2 then acetylates mutilin to produce 14-O-acetylmutilin. Finally, the cytochrome P450 monooxygenase ple1 catalyzes hydroxylation on the alpha position of the acetyl side chain of 14-O-acetylmutilin to yield pleuromutilin. This Rhodocybe pseudopiperita (Clitopilus pseudopiperitus) protein is Acetyltransferase ple2.